The primary structure comprises 482 residues: Butyrophilin-like protein 2 (482 aa).

Residues 1–6 lie on the Cytoplasmic side of the membrane; that stretch reads MVDFPG. Residues 7–23 traverse the membrane as a helical; Signal-anchor for type II membrane protein segment; sequence YNLSGAVASFLFILLTM. The Extracellular portion of the chain corresponds to 24–482; that stretch reads KQSEDFRVIG…VAVGLPRKRS (459 aa). Ig-like V-type domains lie at 29–140, 142–234, and 236–355; these read FRVI…LLLK, AGLG…SVIS, and PEKL…ASLD. Intrachain disulfides connect Cys50-Cys124, Cys164-Cys218, and Cys267-Cys341. Asn210 is a glycosylation site (N-linked (GlcNAc...) asparagine). The N-linked (GlcNAc...) asparagine glycan is linked to Asn427.

This sequence belongs to the immunoglobulin superfamily. BTN/MOG family. In terms of tissue distribution, expressed in brain, heart, kidney, liver, pancreas, ovary, leukocyte, small intestine, testis and thymus.

Its subcellular location is the membrane. Negative regulator of T-cell proliferation. In Homo sapiens (Human), this protein is Butyrophilin-like protein 2.